The chain runs to 227 residues: Cytochrome c oxidase subunit 2 (227 aa).

Over methionine 1–serine 14 the chain is Mitochondrial intermembrane. The chain crosses the membrane as a helical span at residues proline 15–methionine 45. Residues leucine 46–glutamine 59 lie on the Mitochondrial matrix side of the membrane. A helical transmembrane segment spans residues glutamate 60 to methionine 87. Residues aspartate 88–leucine 227 lie on the Mitochondrial intermembrane side of the membrane. Residues histidine 161, cysteine 196, glutamate 198, cysteine 200, histidine 204, and methionine 207 each coordinate Cu cation. Residue glutamate 198 participates in Mg(2+) binding.

Belongs to the cytochrome c oxidase subunit 2 family. In terms of assembly, component of the cytochrome c oxidase (complex IV, CIV), a multisubunit enzyme composed of 14 subunits. The complex is composed of a catalytic core of 3 subunits MT-CO1, MT-CO2 and MT-CO3, encoded in the mitochondrial DNA, and 11 supernumerary subunits COX4I, COX5A, COX5B, COX6A, COX6B, COX6C, COX7A, COX7B, COX7C, COX8 and NDUFA4, which are encoded in the nuclear genome. The complex exists as a monomer or a dimer and forms supercomplexes (SCs) in the inner mitochondrial membrane with NADH-ubiquinone oxidoreductase (complex I, CI) and ubiquinol-cytochrome c oxidoreductase (cytochrome b-c1 complex, complex III, CIII), resulting in different assemblies (supercomplex SCI(1)III(2)IV(1) and megacomplex MCI(2)III(2)IV(2)). Found in a complex with TMEM177, COA6, COX18, COX20, SCO1 and SCO2. Interacts with TMEM177 in a COX20-dependent manner. Interacts with COX20. Interacts with COX16. The cofactor is Cu cation.

Its subcellular location is the mitochondrion inner membrane. It carries out the reaction 4 Fe(II)-[cytochrome c] + O2 + 8 H(+)(in) = 4 Fe(III)-[cytochrome c] + 2 H2O + 4 H(+)(out). Functionally, component of the cytochrome c oxidase, the last enzyme in the mitochondrial electron transport chain which drives oxidative phosphorylation. The respiratory chain contains 3 multisubunit complexes succinate dehydrogenase (complex II, CII), ubiquinol-cytochrome c oxidoreductase (cytochrome b-c1 complex, complex III, CIII) and cytochrome c oxidase (complex IV, CIV), that cooperate to transfer electrons derived from NADH and succinate to molecular oxygen, creating an electrochemical gradient over the inner membrane that drives transmembrane transport and the ATP synthase. Cytochrome c oxidase is the component of the respiratory chain that catalyzes the reduction of oxygen to water. Electrons originating from reduced cytochrome c in the intermembrane space (IMS) are transferred via the dinuclear copper A center (CU(A)) of subunit 2 and heme A of subunit 1 to the active site in subunit 1, a binuclear center (BNC) formed by heme A3 and copper B (CU(B)). The BNC reduces molecular oxygen to 2 water molecules using 4 electrons from cytochrome c in the IMS and 4 protons from the mitochondrial matrix. This Eulemur macaco (Black lemur) protein is Cytochrome c oxidase subunit 2 (MT-CO2).